Consider the following 300-residue polypeptide: C-5 sterol desaturase (300 aa).

Transmembrane regions (helical) follow at residues 3–23 (DPVL…WTAA), 68–88 (SLAL…QLSA), 91–111 (WYTW…YHRI), and 147–167 (ILMW…FCSW). Positions 94 to 227 (WVIAIVGVDL…LIIWDRLFGS (134 aa)) constitute a Fatty acid hydroxylase domain.

This sequence belongs to the sterol desaturase family.

It is found in the cell membrane. The polypeptide is C-5 sterol desaturase (erg3) (Mycobacterium bovis (strain ATCC BAA-935 / AF2122/97)).